The following is a 788-amino-acid chain: Ribonucleoside-diphosphate reductase large subunit (788 aa).

The ATP-cone domain maps to 7-98 (TYVVKRDGRK…VSNLHKKTNK (92 aa)). Residues 11–12 (KR), 17–23 (EDVHFDK), threonine 59, and aspartate 63 contribute to the ATP site. Residues serine 208 and serine 223 each contribute to the GDP site. A disulfide bridge links cysteine 224 with cysteine 450. DTTP contacts are provided by residues 232–234 (DSI), lysine 249, arginine 262, and 269–270 (AG). Position 433 (asparagine 433) interacts with GDP. Asparagine 433 acts as the Proton acceptor in catalysis. Cysteine 435 acts as the Cysteine radical intermediate in catalysis. Residues glutamate 437 and 610–613 (TAST) each bind GDP. Glutamate 437 functions as the Proton acceptor in the catalytic mechanism.

The protein belongs to the ribonucleoside diphosphate reductase large chain family. As to quaternary structure, heterodimer of a large and a small subunit.

It carries out the reaction a 2'-deoxyribonucleoside 5'-diphosphate + [thioredoxin]-disulfide + H2O = a ribonucleoside 5'-diphosphate + [thioredoxin]-dithiol. Under complex allosteric control mediated by deoxynucleoside triphosphates and ATP binding to separate specificity and activation sites on the large subunit. The type of nucleotide bound at the specificity site determines substrate preference. It seems probable that ATP makes the enzyme reduce CDP and UDP, dGTP favors ADP reduction and dTTP favors GDP reduction. Stimulated by ATP and inhibited by dATP binding to the activity site. Functionally, provides the precursors necessary for DNA synthesis. Catalyzes the biosynthesis of deoxyribonucleotides from the corresponding ribonucleotides. This chain is Ribonucleoside-diphosphate reductase large subunit (rnr-1), found in Caenorhabditis elegans.